Consider the following 260-residue polypeptide: Sugar fermentation stimulation protein homolog (260 aa).

It belongs to the SfsA family.

The protein is Sugar fermentation stimulation protein homolog of Chloroflexus aggregans (strain MD-66 / DSM 9485).